We begin with the raw amino-acid sequence, 238 residues long: Large ribosomal subunit protein uL2 (238 aa).

The tract at residues 203-223 is disordered; that stretch reads GGGAWKHPGKPTTVSRNAPPG.

The protein belongs to the universal ribosomal protein uL2 family. Part of the 50S ribosomal subunit. Forms a bridge to the 30S subunit in the 70S ribosome.

One of the primary rRNA binding proteins. Required for association of the 30S and 50S subunits to form the 70S ribosome, for tRNA binding and peptide bond formation. It has been suggested to have peptidyltransferase activity; this is somewhat controversial. Makes several contacts with the 16S rRNA in the 70S ribosome. The sequence is that of Large ribosomal subunit protein uL2 from Methanosarcina barkeri (strain Fusaro / DSM 804).